The sequence spans 86 residues: Large ribosomal subunit protein bL27 (86 aa).

Residues 1–20 (MAHKKAGGSSRNGRDSESKR) form a disordered region.

The protein belongs to the bacterial ribosomal protein bL27 family.

This is Large ribosomal subunit protein bL27 from Paraburkholderia phymatum (strain DSM 17167 / CIP 108236 / LMG 21445 / STM815) (Burkholderia phymatum).